Here is an 880-residue protein sequence, read N- to C-terminus: Translation initiation factor IF-2 (880 aa).

Composition is skewed to basic and acidic residues over residues 180–194 and 202–228; these read QEAA…EAAK and LAEE…DHHI. The interval 180–289 is disordered; sequence QEAATKRKQD…APESMAHGFN (110 aa). Residues 249 to 262 show a composition bias toward basic residues; sequence GRRARNKSNAKKRG. The tr-type G domain occupies 380 to 549; the sequence is SRAPVVTIMG…LLQAEVLELK (170 aa). Residues 389-396 are G1; sequence GHVDHGKT. 389-396 provides a ligand contact to GTP; that stretch reads GHVDHGKT. The G2 stretch occupies residues 414-418; the sequence is GITQH. Positions 435 to 438 are G3; that stretch reads DTPG. Residues 435–439 and 489–492 contribute to the GTP site; these read DTPGH and NKMD. Residues 489–492 are G4; that stretch reads NKMD. A G5 region spans residues 525-527; it reads SAK.

It belongs to the TRAFAC class translation factor GTPase superfamily. Classic translation factor GTPase family. IF-2 subfamily.

Its subcellular location is the cytoplasm. In terms of biological role, one of the essential components for the initiation of protein synthesis. Protects formylmethionyl-tRNA from spontaneous hydrolysis and promotes its binding to the 30S ribosomal subunits. Also involved in the hydrolysis of GTP during the formation of the 70S ribosomal complex. This Shewanella baltica (strain OS223) protein is Translation initiation factor IF-2.